Consider the following 621-residue polypeptide: Chaperone protein HscA homolog (621 aa).

This sequence belongs to the heat shock protein 70 family.

Its function is as follows. Chaperone involved in the maturation of iron-sulfur cluster-containing proteins. Has a low intrinsic ATPase activity which is markedly stimulated by HscB. This is Chaperone protein HscA homolog from Acidithiobacillus ferrooxidans (strain ATCC 23270 / DSM 14882 / CIP 104768 / NCIMB 8455) (Ferrobacillus ferrooxidans (strain ATCC 23270)).